The following is a 92-amino-acid chain: Probable Fe(2+)-trafficking protein (92 aa).

The protein belongs to the Fe(2+)-trafficking protein family.

Its function is as follows. Could be a mediator in iron transactions between iron acquisition and iron-requiring processes, such as synthesis and/or repair of Fe-S clusters in biosynthetic enzymes. In Shewanella sp. (strain ANA-3), this protein is Probable Fe(2+)-trafficking protein.